The chain runs to 426 residues: Glutamyl-tRNA reductase (426 aa).

Residues 49–52, Ser101, 106–108, and Gln112 contribute to the substrate site; these read TCNR and EPQ. Catalysis depends on Cys50, which acts as the Nucleophile. Residue 181 to 186 participates in NADP(+) binding; sequence GAGETI. The segment at 405-426 is disordered; it reads RLFPEKPGYQHPPHSYPDREDR.

The protein belongs to the glutamyl-tRNA reductase family. In terms of assembly, homodimer.

It catalyses the reaction (S)-4-amino-5-oxopentanoate + tRNA(Glu) + NADP(+) = L-glutamyl-tRNA(Glu) + NADPH + H(+). It functions in the pathway porphyrin-containing compound metabolism; protoporphyrin-IX biosynthesis; 5-aminolevulinate from L-glutamyl-tRNA(Glu): step 1/2. Functionally, catalyzes the NADPH-dependent reduction of glutamyl-tRNA(Glu) to glutamate 1-semialdehyde (GSA). The chain is Glutamyl-tRNA reductase from Xanthomonas axonopodis pv. citri (strain 306).